Reading from the N-terminus, the 96-residue chain is Small ribosomal subunit protein bS18 (96 aa).

The protein belongs to the bacterial ribosomal protein bS18 family. In terms of assembly, part of the 30S ribosomal subunit. Forms a tight heterodimer with protein bS6.

In terms of biological role, binds as a heterodimer with protein bS6 to the central domain of the 16S rRNA, where it helps stabilize the platform of the 30S subunit. The polypeptide is Small ribosomal subunit protein bS18 (Borrelia garinii subsp. bavariensis (strain ATCC BAA-2496 / DSM 23469 / PBi) (Borreliella bavariensis)).